The primary structure comprises 1740 residues: SH3 and multiple ankyrin repeat domains protein 3 (1740 aa).

The tract at residues 1–75 (MDGPGASAVV…KFLDEERLLQ (75 aa)) is intramolecular interaction with the ANK repeats. Tyr122 is subject to Phosphotyrosine. 6 ANK repeats span residues 148–181 (SGEC…FRTR), 182–214 (DGLT…YKDS), 215–245 (RGLT…QLGT), 249–278 (NGWQ…NMGA), 282–311 (SGNT…NKDV), and 315–345 (NSQT…DVVP). Residues 354 to 466 (KRRRLAGPSG…PPPRGPKRKL (113 aa)) form a disordered region. Ser373, Ser375, Ser387, and Ser394 each carry phosphoserine. Residues 404–415 (LQEEKDRDRDGE) show a composition bias toward basic and acidic residues. Residues 444-460 (APGPGPASPAPPAPPPR) show a composition bias toward pro residues. The 60-residue stretch at 470-529 (VPGRKFIAVKAHSPQGEGEIPLHRGEAVKVLSIGEGGFWEGTVKGRTGWFPADCVEEVQM) folds into the SH3 domain. Ser482 is modified (phosphoserine). Tyr555 carries the post-translational modification Phosphotyrosine. Residues 570–664 (VAILQKRDHE…RLVMKVVSVT (95 aa)) form the PDZ domain. Residues 664–687 (TRKPEEDSARRRAPPPPKRAPSTT) are disordered. Residues 677 to 684 (PPPPKRAP) form a required for interaction with ABI1 region. Phosphoserine is present on residues Ser694, Ser781, Ser790, and Ser801. 5 disordered regions span residues 759–855 (RQGL…RSSF), 868–1053 (AGLY…QPSR), 1115–1199 (AARE…MILS), 1211–1463 (LIVV…GPAR), and 1476–1518 (GDPV…EPVG). Over residues 812–845 (IPPPPQTAPPPPPAPYYFDSGPPPTFSPPPPPPG) the composition is skewed to pro residues. 2 positions are modified to phosphoserine: Ser891 and Ser898. Thr913 is modified (phosphothreonine). Position 931 is a phosphotyrosine (Tyr931). Residue Arg966 is modified to Asymmetric dimethylarginine. A compositionally biased stretch (basic and acidic residues) spans 1017 to 1027 (VKERRLEERRR). A compositionally biased stretch (polar residues) spans 1123 to 1132 (SQTPSRSPTP). A Phosphothreonine modification is found at Thr1131. Phosphoserine occurs at positions 1135, 1160, 1164, and 1167. Residues 1175 to 1195 (ARREAEKPTREERKSPEDKKS) are compositionally biased toward basic and acidic residues. Residue Thr1235 is modified to Phosphothreonine. Composition is skewed to pro residues over residues 1252–1262 (MPSPRAQPPGS) and 1322–1334 (TPPP…PTTV). The residue at position 1254 (Ser1254) is a Phosphoserine. The span at 1335 to 1344 (PSPASGKPSS) shows a compositional bias: low complexity. Basic and acidic residues predominate over residues 1361–1371 (ADTRSSSDPHL). The segment covering 1372-1393 (ETTSTISTVSSMSTLSSESGEL) has biased composition (low complexity). An SH3-binding motif is present at residues 1411–1417 (PPVPPKP). Ser1421 bears the Phosphoserine mark. The stretch at 1495–1515 (ISELSSRLQQLNKDTRSLGEE) forms a coiled coil. Positions 1496–1506 (SELSSRLQQLN) are enriched in polar residues. Phosphoserine is present on residues Ser1511, Ser1522, Ser1530, and Ser1549. 2 disordered regions span residues 1556–1594 (ISAQ…PASL) and 1637–1673 (VRSV…QQKP). Positions 1637–1647 (VRSVSARSRSP) are enriched in low complexity. Residues Ser1644, Ser1646, and Ser1648 each carry the phosphoserine modification. The segment covering 1648–1658 (SPSPLPSPSPG) has biased composition (pro residues). Residues 1659-1668 (SGPSAGPRRP) are compositionally biased toward low complexity. Positions 1677 to 1740 (WSKFDVGDWL…ERALRQLDGS (64 aa)) constitute an SAM domain.

It belongs to the SHANK family. May homomultimerize via its SAM domain. Interacts with BAIAP2, DBNL and SLC17A7/VGLUT1. Interacts with DLGAP1/GKAP, GRM1/MGLUR1, GRM5/MGLUR5 and LZTS3 C-termini via its PDZ domain. Interacts with ABI1, HOMER1, HOMER2, HOMER3 and CTTN/cortactin SH3 domain. Is part of a complex with DLG4/PSD-95 and DLGAP1/GKAP. Interacts (via PDZ domain) with the GRIA1 subunit of the AMPA receptor (via PDZ-binding motif). Interacts with WASF1 and CYFIP2; the interactions mediate the association of SHANK3 with the WAVE1 complex. Interacts with ARPC2; the interaction probably mediates the association of SHANK3 with the Arp2/3 complex. Interacts (via ANK repeats) with SHARPIN and SPTAN1. Interacts (via PDZ domain) with ARHGAP44 (probably via PDZ-binding motif); the interaction takes place in dendritic spines and promotes GRIA1 exocytosis. Interacts with CAMK2A. Interacts with DIP2A. Interacts with ADGRL3. Widely expressed in brain (at protein level).

The protein resides in the cytoplasm. It localises to the postsynaptic density. Its subcellular location is the cell projection. The protein localises to the dendritic spine. Its function is as follows. Major scaffold postsynaptic density protein which interacts with multiple proteins and complexes to orchestrate the dendritic spine and synapse formation, maturation and maintenance. Interconnects receptors of the postsynaptic membrane including NMDA-type and metabotropic glutamate receptors via complexes with GKAP/PSD-95 and HOMER, respectively, and the actin-based cytoskeleton. Plays a role in the structural and functional organization of the dendritic spine and synaptic junction through the interaction with Arp2/3 and WAVE1 complex as well as the promotion of the F-actin clusters. By way of this control of actin dynamics, participates in the regulation of developing neurons growth cone motility and the NMDA receptor-signaling. Also modulates GRIA1 exocytosis and GRM5/MGLUR5 expression and signaling to control the AMPA and metabotropic glutamate receptor-mediated synaptic transmission and plasticity. May be required at an early stage of synapse formation and be inhibited by IGF1 to promote synapse maturation. This chain is SH3 and multiple ankyrin repeat domains protein 3 (Shank3), found in Rattus norvegicus (Rat).